The primary structure comprises 193 residues: Adenine phosphoribosyltransferase (193 aa).

It belongs to the purine/pyrimidine phosphoribosyltransferase family. In terms of assembly, homodimer.

The protein localises to the cytoplasm. The enzyme catalyses AMP + diphosphate = 5-phospho-alpha-D-ribose 1-diphosphate + adenine. Its pathway is purine metabolism; AMP biosynthesis via salvage pathway; AMP from adenine: step 1/1. Catalyzes a salvage reaction resulting in the formation of AMP, that is energically less costly than de novo synthesis. The sequence is that of Adenine phosphoribosyltransferase from Bifidobacterium adolescentis (strain ATCC 15703 / DSM 20083 / NCTC 11814 / E194a).